The chain runs to 341 residues: Phenazine O-methyltransferase PhzM (341 aa).

S-adenosyl-L-methionine-binding positions include aspartate 205 and 231–233; that span reads GDF. Catalysis depends on histidine 251, which acts as the Proton acceptor.

This sequence belongs to the class I-like SAM-binding methyltransferase superfamily. Cation-independent O-methyltransferase family. In terms of assembly, homodimer.

It carries out the reaction 1,6-dihydroxyphenazine + S-adenosyl-L-methionine = 1-hydroxy-6-methoxyphenazine + S-adenosyl-L-homocysteine + H(+). The enzyme catalyses 1-hydroxy-6-methoxyphenazine + S-adenosyl-L-methionine = 1,6-dimethoxyphenazine + S-adenosyl-L-homocysteine + H(+). The catalysed reaction is 1-hydroxy-6-methoxyphenazine N(10)-oxide + S-adenosyl-L-methionine = 1,6-dimethoxyphenazine N(5)-oxide + S-adenosyl-L-homocysteine. It catalyses the reaction 1,6-dihydroxyphenazine N(5),N(10)-dioxide + S-adenosyl-L-methionine = 1-hydroxy-6-methoxyphenazine N(5),N(10)-dioxide + S-adenosyl-L-homocysteine. It carries out the reaction 1-hydroxy-6-methoxyphenazine N(5),N(10)-dioxide + S-adenosyl-L-methionine = 1,6-dimethoxyphenazine N(5),N(10)-dioxide + S-adenosyl-L-homocysteine. In terms of biological role, involved in the biosynthesis of phenazine natural products including myxin, an N(5),N(10)-dioxide phenazine antiobiotic, which has antimicrobial activity. O-methyltransferase, which converts iodinin (1,6-dihydroxyphenazine N(5),N(10)-dioxide) to myxin (1-hydroxy-6-methoxyphenazine N(5),N(10)-dioxide). Catalyzes both monomethoxy and dimethoxy formation of phenazine natural compounds. Acts on a wide variety of substrates, catalyzing O-methylation of phenazines with non-, mono- or di-N-oxide. Highest activity with 1,6-dihydroxyphenazine (DHP) as substrate. Less active with monohydroxy-containing and monohydroxy-monomethoxy-containing phenazines. Least active with non-phenazine substrates, such as 8-hydroxyquinoline and 6-hydroxyquinoline. Is not able to convert 1-hydroxyphenazine to 1-hydroxy-N5-methylphenazine (pyocyanine), hence does not function as an N-methyltransferase. This chain is Phenazine O-methyltransferase PhzM, found in Lysobacter antibioticus.